The primary structure comprises 92 residues: Sperm-specific protein Phi-1 (92 aa).

The disordered stretch occupies residues 1–92; that stretch reads MPSPTRRSSK…RVRAKKKKKK (92 aa). Basic residues-rich tracts occupy residues 7–19 and 29–92; these read RSSKSRSKSRSRS and AAKR…KKKK.

As to expression, sperm.

The protein resides in the nucleus. The protein localises to the chromosome. In terms of biological role, involved in nuclear basic protein transition: histones are replaced by spermatid specific proteins which are themselves replaced by protamines in late spermatids. This Mytilus edulis (Blue mussel) protein is Sperm-specific protein Phi-1.